We begin with the raw amino-acid sequence, 141 residues long: Putative pre-16S rRNA nuclease (141 aa).

It belongs to the YqgF nuclease family.

It is found in the cytoplasm. Its function is as follows. Could be a nuclease involved in processing of the 5'-end of pre-16S rRNA. The sequence is that of Putative pre-16S rRNA nuclease from Aliivibrio fischeri (strain MJ11) (Vibrio fischeri).